Consider the following 854-residue polypeptide: Metastasis-associated in colon cancer protein 1 (854 aa).

The residue at position 19 (Ser-19) is a Phosphoserine. Positions 212–349 constitute a ZU5 domain; it reads VTKACKVNHQ…LSQVMYLVVA (138 aa). The SH3 domain maps to 549-619; sequence NFTNYGVTLK…HCKNVKVISK (71 aa).

As to quaternary structure, interacts with FASLG.

It is found in the cytoplasm. The protein resides in the nucleus. Functionally, acts as a transcription activator for MET and as a key regulator of HGF-MET signaling. This is Metastasis-associated in colon cancer protein 1 (MACC1) from Pongo abelii (Sumatran orangutan).